A 194-amino-acid polypeptide reads, in one-letter code: Protein GrpE (194 aa).

This sequence belongs to the GrpE family. As to quaternary structure, homodimer.

It localises to the cytoplasm. Functionally, participates actively in the response to hyperosmotic and heat shock by preventing the aggregation of stress-denatured proteins, in association with DnaK and GrpE. It is the nucleotide exchange factor for DnaK and may function as a thermosensor. Unfolded proteins bind initially to DnaJ; upon interaction with the DnaJ-bound protein, DnaK hydrolyzes its bound ATP, resulting in the formation of a stable complex. GrpE releases ADP from DnaK; ATP binding to DnaK triggers the release of the substrate protein, thus completing the reaction cycle. Several rounds of ATP-dependent interactions between DnaJ, DnaK and GrpE are required for fully efficient folding. In Aliivibrio fischeri (strain ATCC 700601 / ES114) (Vibrio fischeri), this protein is Protein GrpE.